The chain runs to 101 residues: Protein Tat (101 aa).

Residues 1–24 (MEPVDPRLEPWKHPGSQPKTACTN) are interaction with human CREBBP. The tract at residues 1–48 (MEPVDPRLEPWKHPGSQPKTACTNCYCKKCCFHCQVCFITKGLGISYG) is transactivation. Positions 22, 25, and 27 each coordinate Zn(2+). The cysteine-rich stretch occupies residues 22 to 37 (CTNCYCKKCCFHCQVC). The residue at position 28 (Lys-28) is an N6-acetyllysine; by host PCAF. Residues Cys-30, His-33, Cys-34, and Cys-37 each contribute to the Zn(2+) site. Residues 38 to 48 (FITKGLGISYG) are core. The span at 48–57 (GRKKRRQRRR) shows a compositional bias: basic residues. The interval 48–101 (GRKKRRQRRRAPPDSEVHQVSLPKQPASQPQGDPTGPKESKKKVERETETDPVH) is disordered. The Nuclear localization signal, RNA-binding (TAR), and protein transduction motif lies at 49–57 (RKKRRQRRR). The segment at 49–86 (RKKRRQRRRAPPDSEVHQVSLPKQPASQPQGDPTGPKE) is interaction with the host capping enzyme RNGTT. Residues Lys-50 and Lys-51 each carry the N6-acetyllysine; by host EP300 and GCN5L2 modification. 2 positions are modified to asymmetric dimethylarginine; by host PRMT6: Arg-52 and Arg-53. A Glycyl lysine isopeptide (Lys-Gly) (interchain with G-Cter in ubiquitin) cross-link involves residue Lys-71. Positions 83-101 (GPKESKKKVERETETDPVH) are enriched in basic and acidic residues.

This sequence belongs to the lentiviruses Tat family. As to quaternary structure, interacts with host CCNT1. Associates with the P-TEFb complex composed at least of Tat, P-TEFb (CDK9 and CCNT1), TAR RNA, RNA Pol II. Recruits the HATs CREBBP, TAF1/TFIID, EP300, PCAF and GCN5L2. Interacts with host KAT5/Tip60; this interaction targets the latter to degradation. Interacts with the host deacetylase SIRT1. Interacts with host capping enzyme RNGTT; this interaction stimulates RNGTT. Binds to host KDR, and to the host integrins ITGAV/ITGB3 and ITGA5/ITGB1. Interacts with host KPNB1/importin beta-1 without previous binding to KPNA1/importin alpha-1. Interacts with EIF2AK2. Interacts with host nucleosome assembly protein NAP1L1; this interaction may be required for the transport of Tat within the nucleus, since the two proteins interact at the nuclear rim. Interacts with host C1QBP/SF2P32; this interaction involves lysine-acetylated Tat. Interacts with the host chemokine receptors CCR2, CCR3 and CXCR4. Interacts with host DPP4/CD26; this interaction may trigger an anti-proliferative effect. Interacts with host LDLR. Interacts with the host extracellular matrix metalloproteinase MMP1. Interacts with host PRMT6; this interaction mediates Tat's methylation. Interacts with, and is ubiquitinated by MDM2/Hdm2. Interacts with host PSMC3 and HTATIP2. Interacts with STAB1; this interaction may overcome SATB1-mediated repression of IL2 and IL2RA (interleukin) in T cells by binding to the same domain than HDAC1. Interacts (when acetylated) with human CDK13, thereby increasing HIV-1 mRNA splicing and promoting the production of the doubly spliced HIV-1 protein Nef. Interacts with host TBP; this interaction modulates the activity of transcriptional pre-initiation complex. Interacts with host RELA. Interacts with host PLSCR1; this interaction negatively regulates Tat transactivation activity by altering its subcellular distribution. Asymmetrical arginine methylation by host PRMT6 seems to diminish the transactivation capacity of Tat and affects the interaction with host CCNT1. Post-translationally, acetylation by EP300, CREBBP, GCN5L2/GCN5 and PCAF regulates the transactivation activity of Tat. EP300-mediated acetylation of Lys-50 promotes dissociation of Tat from the TAR RNA through the competitive binding to PCAF's bromodomain. In addition, the non-acetylated Tat's N-terminus can also interact with PCAF. PCAF-mediated acetylation of Lys-28 enhances Tat's binding to CCNT1. Lys-50 is deacetylated by SIRT1. In terms of processing, polyubiquitination by host MDM2 does not target Tat to degradation, but activates its transactivation function and fosters interaction with CCNT1 and TAR RNA. Phosphorylated by EIF2AK2 on serine and threonine residues adjacent to the basic region important for TAR RNA binding and function. Phosphorylation of Tat by EIF2AK2 is dependent on the prior activation of EIF2AK2 by dsRNA.

Its subcellular location is the host nucleus. It localises to the host nucleolus. It is found in the host cytoplasm. The protein localises to the secreted. Functionally, transcriptional activator that increases RNA Pol II processivity, thereby increasing the level of full-length viral transcripts. Recognizes a hairpin structure at the 5'-LTR of the nascent viral mRNAs referred to as the transactivation responsive RNA element (TAR) and recruits the cyclin T1-CDK9 complex (P-TEFb complex) that will in turn hyperphosphorylate the RNA polymerase II to allow efficient elongation. The CDK9 component of P-TEFb and other Tat-activated kinases hyperphosphorylate the C-terminus of RNA Pol II that becomes stabilized and much more processive. Other factors such as HTATSF1/Tat-SF1, SUPT5H/SPT5, and HTATIP2 are also important for Tat's function. Besides its effect on RNA Pol II processivity, Tat induces chromatin remodeling of proviral genes by recruiting the histone acetyltransferases (HATs) CREBBP, EP300 and PCAF to the chromatin. This also contributes to the increase in proviral transcription rate, especially when the provirus integrates in transcriptionally silent region of the host genome. To ensure maximal activation of the LTR, Tat mediates nuclear translocation of NF-kappa-B by interacting with host RELA. Through its interaction with host TBP, Tat may also modulate transcription initiation. Tat can reactivate a latently infected cell by penetrating in it and transactivating its LTR promoter. In the cytoplasm, Tat is thought to act as a translational activator of HIV-1 mRNAs. Extracellular circulating Tat can be endocytosed by surrounding uninfected cells via the binding to several surface receptors such as CD26, CXCR4, heparan sulfate proteoglycans (HSPG) or LDLR. Neurons are rarely infected, but they internalize Tat via their LDLR. Through its interaction with nuclear HATs, Tat is potentially able to control the acetylation-dependent cellular gene expression. Modulates the expression of many cellular genes involved in cell survival, proliferation or in coding for cytokines or cytokine receptors. Tat plays a role in T-cell and neurons apoptosis. Tat induced neurotoxicity and apoptosis probably contribute to neuroAIDS. Circulating Tat also acts as a chemokine-like and/or growth factor-like molecule that binds to specific receptors on the surface of the cells, affecting many cellular pathways. In the vascular system, Tat binds to ITGAV/ITGB3 and ITGA5/ITGB1 integrins dimers at the surface of endothelial cells and competes with bFGF for heparin-binding sites, leading to an excess of soluble bFGF. This is Protein Tat from Human immunodeficiency virus type 1 group M subtype B (isolate SF162) (HIV-1).